Consider the following 226-residue polypeptide: Ribonuclease 3 (226 aa).

The 123-residue stretch at 6 to 128 folds into the RNase III domain; sequence INKLQRKLGY…LIGGVFLDSD (123 aa). E41 serves as a coordination point for Mg(2+). Residue D45 is part of the active site. Residues D114 and E117 each contribute to the Mg(2+) site. E117 is a catalytic residue. The region spanning 155-225 is the DRBM domain; it reads DPKTRLQEFL…AEQALIKLGI (71 aa).

Belongs to the ribonuclease III family. Homodimer. Mg(2+) serves as cofactor.

It localises to the cytoplasm. It carries out the reaction Endonucleolytic cleavage to 5'-phosphomonoester.. In terms of biological role, digests double-stranded RNA. Involved in the processing of primary rRNA transcript to yield the immediate precursors to the large and small rRNAs (23S and 16S). Processes some mRNAs, and tRNAs when they are encoded in the rRNA operon. Processes pre-crRNA and tracrRNA of type II CRISPR loci if present in the organism. In Erwinia tasmaniensis (strain DSM 17950 / CFBP 7177 / CIP 109463 / NCPPB 4357 / Et1/99), this protein is Ribonuclease 3.